A 394-amino-acid polypeptide reads, in one-letter code: 1-deoxy-D-xylulose 5-phosphate reductoisomerase (394 aa).

NADPH is bound by residues T10, G11, S12, I13, N38, and N125. K126 lines the 1-deoxy-D-xylulose 5-phosphate pocket. An NADPH-binding site is contributed by E127. Position 151 (D151) interacts with Mn(2+). Residues S152, E153, S182, and H205 each contribute to the 1-deoxy-D-xylulose 5-phosphate site. A Mn(2+)-binding site is contributed by E153. G211 contacts NADPH. 4 residues coordinate 1-deoxy-D-xylulose 5-phosphate: S218, N223, K224, and E227. Mn(2+) is bound at residue E227.

The protein belongs to the DXR family. It depends on Mg(2+) as a cofactor. Requires Mn(2+) as cofactor.

The enzyme catalyses 2-C-methyl-D-erythritol 4-phosphate + NADP(+) = 1-deoxy-D-xylulose 5-phosphate + NADPH + H(+). It participates in isoprenoid biosynthesis; isopentenyl diphosphate biosynthesis via DXP pathway; isopentenyl diphosphate from 1-deoxy-D-xylulose 5-phosphate: step 1/6. Its function is as follows. Catalyzes the NADPH-dependent rearrangement and reduction of 1-deoxy-D-xylulose-5-phosphate (DXP) to 2-C-methyl-D-erythritol 4-phosphate (MEP). In Methylococcus capsulatus (strain ATCC 33009 / NCIMB 11132 / Bath), this protein is 1-deoxy-D-xylulose 5-phosphate reductoisomerase.